We begin with the raw amino-acid sequence, 544 residues long: 4-coumarate:CoA ligase 1 (544 aa).

Belongs to the ATP-dependent AMP-binding enzyme family. In terms of assembly, monomer. Mostly expressed in flower organs, with highest levels in corollas, and, to a lesser extent, in tubes, sepals, pistils, stamen and ovaries. Also present at low levels in leaves.

The protein resides in the cytoplasm. Its subcellular location is the cytosol. It carries out the reaction (E)-4-coumarate + ATP + CoA = (E)-4-coumaroyl-CoA + AMP + diphosphate. It catalyses the reaction (E)-caffeate + ATP + CoA = (E)-caffeoyl-CoA + AMP + diphosphate. The catalysed reaction is benzoate + ATP + CoA = benzoyl-CoA + AMP + diphosphate. The enzyme catalyses (E)-cinnamate + ATP + CoA = (E)-cinnamoyl-CoA + AMP + diphosphate. It carries out the reaction (E)-ferulate + ATP + CoA = (E)-feruloyl-CoA + AMP + diphosphate. Its pathway is phenylpropanoid metabolism; trans-cinnamate biosynthesis. It functions in the pathway phytoalexin biosynthesis; 3,4',5-trihydroxystilbene biosynthesis; 3,4',5-trihydroxystilbene from trans-4-coumarate: step 1/2. Catalyzes the formation of CoA esters of trans-cinnamic acid, 4-coumaric acid, ferulic acid, benzoic acid and caffeic acid. The sequence is that of 4-coumarate:CoA ligase 1 from Petunia hybrida (Petunia).